A 208-amino-acid polypeptide reads, in one-letter code: MPAFRYLIVLPLLCWGFASQAETTPQSRLKSFLDSARTLQADFTQVRLDESGRPRQESGGSFYLQRPGKFRWDYTKPYRQQIVSSGGKVWFYDVDLEQVTAKRLGQAVGSTPALLLSGEMALEDNFTIEDQGTEEGMYWIKLVPKSEEGGFRYVLIGLEGDKLAGMELSDNFGQLTRIYFANLRTGITLDPKLFQFSPPAGVDVFEDK.

The signal sequence occupies residues 1–21; the sequence is MPAFRYLIVLPLLCWGFASQA.

It belongs to the LolA family. As to quaternary structure, monomer.

The protein resides in the periplasm. In terms of biological role, participates in the translocation of lipoproteins from the inner membrane to the outer membrane. Only forms a complex with a lipoprotein if the residue after the N-terminal Cys is not an aspartate (The Asp acts as a targeting signal to indicate that the lipoprotein should stay in the inner membrane). The sequence is that of Outer-membrane lipoprotein carrier protein from Methylococcus capsulatus (strain ATCC 33009 / NCIMB 11132 / Bath).